The primary structure comprises 135 residues: Small ribosomal subunit protein uS12 (135 aa).

3-methylthioaspartic acid is present on Asp89. The tract at residues 108–135 (NKRTVSRSKYGTKKAKATDKKATDSKKK) is disordered. The segment covering 111–122 (TVSRSKYGTKKA) has biased composition (basic residues). Residues 123 to 135 (KATDKKATDSKKK) are compositionally biased toward basic and acidic residues.

This sequence belongs to the universal ribosomal protein uS12 family. As to quaternary structure, part of the 30S ribosomal subunit. Contacts proteins S8 and S17. May interact with IF1 in the 30S initiation complex.

In terms of biological role, with S4 and S5 plays an important role in translational accuracy. Interacts with and stabilizes bases of the 16S rRNA that are involved in tRNA selection in the A site and with the mRNA backbone. Located at the interface of the 30S and 50S subunits, it traverses the body of the 30S subunit contacting proteins on the other side and probably holding the rRNA structure together. The combined cluster of proteins S8, S12 and S17 appears to hold together the shoulder and platform of the 30S subunit. The protein is Small ribosomal subunit protein uS12 of Helicobacter pylori (strain HPAG1).